Consider the following 139-residue polypeptide: Putative nickel-responsive regulator (139 aa).

The Ni(2+) site is built by H79, H90, H92, and C98.

Belongs to the transcriptional regulatory CopG/NikR family. Ni(2+) is required as a cofactor.

In terms of biological role, transcriptional regulator. The protein is Putative nickel-responsive regulator of Lawsonia intracellularis (strain PHE/MN1-00).